Reading from the N-terminus, the 350-residue chain is Deoxyribonuclease-2-alpha (350 aa).

The signal sequence occupies residues 1–19 (MAAPSSLLLAALLWVPAEA). Cys-22 and Cys-162 are joined by a disulfide. 4 N-linked (GlcNAc...) asparagine glycosylation sites follow: Asn-89, Asn-215, Asn-269, and Asn-293. Disulfide bonds link Cys-270/Cys-350 and Cys-311/Cys-330. The active site involves His-298.

This sequence belongs to the DNase II family. As to expression, ubiquitous.

The protein localises to the lysosome. The enzyme catalyses Endonucleolytic cleavage to nucleoside 3'-phosphates and 3'-phosphooligonucleotide end-products.. Functionally, hydrolyzes DNA under acidic conditions with a preference for double-stranded DNA. Plays a major role in the clearance of nucleic acids generated through apoptosis, hence preventing autoinflammation. Necessary for proper fetal development and for definitive erythropoiesis in fetal liver and bone marrow, where it degrades nuclear DNA expelled from erythroid precursor cells. The chain is Deoxyribonuclease-2-alpha (Dnase2) from Rattus norvegicus (Rat).